The sequence spans 208 residues: Glycerol-3-phosphate acyltransferase (208 aa).

The next 5 membrane-spanning stretches (helical) occupy residues 3-23 (ILLAALVAYLIGSVSFAVVVS), 51-71 (KAAILTLVGDAFKGWIAVWLA), 78-98 (DVAIAWVAIAVFLGHLYPVFF), 115-135 (AVHPVLGLATALTWLIVAFFF), and 140-160 (LAALVAAVFAPVFDVFLFGMP).

This sequence belongs to the PlsY family. Probably interacts with PlsX.

The protein localises to the cell inner membrane. The enzyme catalyses an acyl phosphate + sn-glycerol 3-phosphate = a 1-acyl-sn-glycero-3-phosphate + phosphate. It participates in lipid metabolism; phospholipid metabolism. Catalyzes the transfer of an acyl group from acyl-phosphate (acyl-PO(4)) to glycerol-3-phosphate (G3P) to form lysophosphatidic acid (LPA). This enzyme utilizes acyl-phosphate as fatty acyl donor, but not acyl-CoA or acyl-ACP. The polypeptide is Glycerol-3-phosphate acyltransferase (Burkholderia orbicola (strain MC0-3)).